The primary structure comprises 248 residues: Probable pyridoxal 5'-phosphate synthase subunit pdx2 (248 aa).

Residue 70–72 (GES) participates in L-glutamine binding. Cys106 serves as the catalytic Nucleophile. Residues Arg136 and 174–175 (IR) contribute to the L-glutamine site. Residues His221 and Glu223 each act as charge relay system in the active site.

Belongs to the glutaminase PdxT/SNO family.

It carries out the reaction aldehydo-D-ribose 5-phosphate + D-glyceraldehyde 3-phosphate + L-glutamine = pyridoxal 5'-phosphate + L-glutamate + phosphate + 3 H2O + H(+). It catalyses the reaction L-glutamine + H2O = L-glutamate + NH4(+). It participates in cofactor biosynthesis; pyridoxal 5'-phosphate biosynthesis. In terms of biological role, catalyzes the hydrolysis of glutamine to glutamate and ammonia as part of the biosynthesis of pyridoxal 5'-phosphate. The resulting ammonia molecule is channeled to the active site of pdx1. The protein is Probable pyridoxal 5'-phosphate synthase subunit pdx2 of Dictyostelium discoideum (Social amoeba).